The chain runs to 76 residues: Exodeoxyribonuclease 7 small subunit (76 aa).

Belongs to the XseB family. In terms of assembly, heterooligomer composed of large and small subunits.

It is found in the cytoplasm. It catalyses the reaction Exonucleolytic cleavage in either 5'- to 3'- or 3'- to 5'-direction to yield nucleoside 5'-phosphates.. Functionally, bidirectionally degrades single-stranded DNA into large acid-insoluble oligonucleotides, which are then degraded further into small acid-soluble oligonucleotides. The sequence is that of Exodeoxyribonuclease 7 small subunit from Geobacter sulfurreducens (strain ATCC 51573 / DSM 12127 / PCA).